Reading from the N-terminus, the 3013-residue chain is DmX-like protein 1 (3013 aa).

WD repeat units lie at residues 108-145 (FLDSIAHNITWDPAGNRLLTGSSCLQLWCNSRKQTEDE), 164-204 (KTAS…RPAV), and 227-275 (AHPR…NDCF). A phosphoserine mark is found at Ser322, Ser420, Ser423, and Ser434. The segment at 418–442 (PSSEASVEDSIQADLKSDEELDDGV) is disordered. One copy of the WD 4 repeat lies at 474 to 514 (DHQIEVLLSEWSKNADMLFSIHPMDGSLLVWHVDWLDEYQP). Position 572 is a phosphoserine (Ser572). 2 WD repeats span residues 578–619 (AHSK…ESAF) and 842–893 (KKRL…TPVS). Ser916 and Ser922 each carry phosphoserine. 3 WD repeats span residues 970-1008 (HLSSSSIYPVCSAPYLLATSCSDDKVRFWRCRVTNGESA), 1145-1193 (EDGS…PLSK), and 1208-1248 (GAPP…EPVI). Residues Ser1829, Ser1896, Ser1903, and Ser1965 each carry the phosphoserine modification. Disordered stretches follow at residues 2364–2406 (GQAN…PPAV) and 2431–2462 (QSRAEYDSEESLESDDEEEEDDDDALPSGLQL). Positions 2385–2398 (SKVSARESPVSSSS) are enriched in low complexity. Over residues 2437–2455 (DSEESLESDDEEEEDDDDA) the composition is skewed to acidic residues. WD repeat units lie at residues 2728 to 2769 (KAIN…TCFR), 2771 to 2810 (GGNSRITRMRFNYQGNKFGIVDADGYLSLYQTNWKCCPVT), 2822 to 2864 (CHNK…ANSL), 2870 to 2909 (CHDSGATVLAYAPKHQLLISGGRKGFTCIFDLRQRQQRQL), 2912 to 2951 (SHDSPVKAIAIDPTEEYFVTGSAEGNIKIWSLSSFSLLHT), and 2964 to 3002 (NIGTGVMQIETGPANHIFSCGADGTMKMRILPDQFSPLN).

The protein is DmX-like protein 1 (Dmxl1) of Mus musculus (Mouse).